The sequence spans 208 residues: 3-demethoxyubiquinol 3-hydroxylase (208 aa).

Fe cation is bound by residues Glu-57, Glu-87, His-90, Glu-139, Glu-171, and His-174.

It belongs to the COQ7 family. It depends on Fe cation as a cofactor.

Its subcellular location is the cell membrane. The enzyme catalyses a 5-methoxy-2-methyl-3-(all-trans-polyprenyl)benzene-1,4-diol + AH2 + O2 = a 3-demethylubiquinol + A + H2O. It participates in cofactor biosynthesis; ubiquinone biosynthesis. In terms of biological role, catalyzes the hydroxylation of 2-nonaprenyl-3-methyl-6-methoxy-1,4-benzoquinol during ubiquinone biosynthesis. The protein is 3-demethoxyubiquinol 3-hydroxylase of Burkholderia vietnamiensis (strain G4 / LMG 22486) (Burkholderia cepacia (strain R1808)).